Here is a 245-residue protein sequence, read N- to C-terminus: tRNA (guanine-N(1)-)-methyltransferase (245 aa).

Residues G113 and I133–L138 contribute to the S-adenosyl-L-methionine site.

Belongs to the RNA methyltransferase TrmD family. Homodimer.

It localises to the cytoplasm. The enzyme catalyses guanosine(37) in tRNA + S-adenosyl-L-methionine = N(1)-methylguanosine(37) in tRNA + S-adenosyl-L-homocysteine + H(+). Its function is as follows. Specifically methylates guanosine-37 in various tRNAs. This Anoxybacillus flavithermus (strain DSM 21510 / WK1) protein is tRNA (guanine-N(1)-)-methyltransferase.